A 431-amino-acid polypeptide reads, in one-letter code: Tyrosine--tRNA ligase (431 aa).

L-tyrosine is bound at residue Tyr33. The 'HIGH' region motif lies at 38–47 (PTADSLHIGS). Tyr172 and Gln176 together coordinate L-tyrosine. A 'KMSKS' region motif is present at residues 234-238 (KFGKS). Residue Lys237 coordinates ATP. An S4 RNA-binding domain is found at 364–431 (INIVEVLNEK…KKNYFVLNVK (68 aa)).

This sequence belongs to the class-I aminoacyl-tRNA synthetase family. TyrS type 1 subfamily. In terms of assembly, homodimer.

The protein resides in the cytoplasm. The catalysed reaction is tRNA(Tyr) + L-tyrosine + ATP = L-tyrosyl-tRNA(Tyr) + AMP + diphosphate + H(+). In terms of biological role, catalyzes the attachment of tyrosine to tRNA(Tyr) in a two-step reaction: tyrosine is first activated by ATP to form Tyr-AMP and then transferred to the acceptor end of tRNA(Tyr). This chain is Tyrosine--tRNA ligase, found in Flavobacterium psychrophilum (strain ATCC 49511 / DSM 21280 / CIP 103535 / JIP02/86).